An 893-amino-acid polypeptide reads, in one-letter code: DNA mismatch repair protein MutS (893 aa).

638–645 contacts ATP; sequence GPNMAGKS.

The protein belongs to the DNA mismatch repair MutS family.

Its function is as follows. This protein is involved in the repair of mismatches in DNA. It is possible that it carries out the mismatch recognition step. This protein has a weak ATPase activity. The chain is DNA mismatch repair protein MutS from Lawsonia intracellularis (strain PHE/MN1-00).